The following is a 263-amino-acid chain: Glutamate racemase (263 aa).

Substrate contacts are provided by residues 10–11 (DS) and 42–43 (YG). The active-site Proton donor/acceptor is the C73. A substrate-binding site is contributed by 74–75 (NS). C183 (proton donor/acceptor) is an active-site residue. Residue 184-185 (TH) participates in substrate binding.

Belongs to the aspartate/glutamate racemases family.

It carries out the reaction L-glutamate = D-glutamate. The protein operates within cell wall biogenesis; peptidoglycan biosynthesis. Functionally, provides the (R)-glutamate required for cell wall biosynthesis. The polypeptide is Glutamate racemase (Acidothermus cellulolyticus (strain ATCC 43068 / DSM 8971 / 11B)).